The primary structure comprises 251 residues: Hydroxyacylglutathione hydrolase (251 aa).

Zn(2+)-binding residues include His53, His55, Asp57, His58, His110, Asp127, and His165.

This sequence belongs to the metallo-beta-lactamase superfamily. Glyoxalase II family. Monomer. Requires Zn(2+) as cofactor.

It carries out the reaction an S-(2-hydroxyacyl)glutathione + H2O = a 2-hydroxy carboxylate + glutathione + H(+). It functions in the pathway secondary metabolite metabolism; methylglyoxal degradation; (R)-lactate from methylglyoxal: step 2/2. Its function is as follows. Thiolesterase that catalyzes the hydrolysis of S-D-lactoyl-glutathione to form glutathione and D-lactic acid. In Yersinia pestis (strain Pestoides F), this protein is Hydroxyacylglutathione hydrolase.